The sequence spans 543 residues: CTP synthase (543 aa).

Positions 1 to 267 (MAKFVFVTGG…CREVLDVLNL (267 aa)) are amidoligase domain. A CTP-binding site is contributed by Ser-13. Ser-13 is a UTP binding site. Residue 14–19 (SIGKGI) participates in ATP binding. Tyr-54 contacts L-glutamine. ATP is bound at residue Asp-71. Asp-71 and Glu-141 together coordinate Mg(2+). Residues 148–150 (DIE), 188–193 (KTKPTQ), and Lys-224 contribute to the CTP site. UTP is bound by residues 188–193 (KTKPTQ) and Lys-224. The region spanning 292-534 (KVALVGKYVQ…IEAAQQRLPN (243 aa)) is the Glutamine amidotransferase type-1 domain. Position 354 (Gly-354) interacts with L-glutamine. Cys-381 (nucleophile; for glutamine hydrolysis) is an active-site residue. Residues 382–385 (LGMQ), Glu-405, and Arg-462 each bind L-glutamine. Residues His-507 and Glu-509 contribute to the active site.

It belongs to the CTP synthase family. Homotetramer.

The enzyme catalyses UTP + L-glutamine + ATP + H2O = CTP + L-glutamate + ADP + phosphate + 2 H(+). It carries out the reaction L-glutamine + H2O = L-glutamate + NH4(+). It catalyses the reaction UTP + NH4(+) + ATP = CTP + ADP + phosphate + 2 H(+). Its pathway is pyrimidine metabolism; CTP biosynthesis via de novo pathway; CTP from UDP: step 2/2. Allosterically activated by GTP, when glutamine is the substrate; GTP has no effect on the reaction when ammonia is the substrate. The allosteric effector GTP functions by stabilizing the protein conformation that binds the tetrahedral intermediate(s) formed during glutamine hydrolysis. Inhibited by the product CTP, via allosteric rather than competitive inhibition. Catalyzes the ATP-dependent amination of UTP to CTP with either L-glutamine or ammonia as the source of nitrogen. Regulates intracellular CTP levels through interactions with the four ribonucleotide triphosphates. The chain is CTP synthase from Synechococcus sp. (strain WH7803).